Here is a 907-residue protein sequence, read N- to C-terminus: Valine--tRNA ligase (907 aa).

The 'HIGH' region signature appears at proline 45 to histidine 55. The short motif at lysine 554–serine 558 is the 'KMSKS' region element. Lysine 557 provides a ligand contact to ATP. The stretch at glycine 838 to asparagine 870 forms a coiled coil.

Belongs to the class-I aminoacyl-tRNA synthetase family. ValS type 1 subfamily. As to quaternary structure, monomer.

The protein localises to the cytoplasm. It carries out the reaction tRNA(Val) + L-valine + ATP = L-valyl-tRNA(Val) + AMP + diphosphate. Its function is as follows. Catalyzes the attachment of valine to tRNA(Val). As ValRS can inadvertently accommodate and process structurally similar amino acids such as threonine, to avoid such errors, it has a 'posttransfer' editing activity that hydrolyzes mischarged Thr-tRNA(Val) in a tRNA-dependent manner. The sequence is that of Valine--tRNA ligase from Bartonella quintana (strain Toulouse) (Rochalimaea quintana).